The chain runs to 225 residues: Two-component response regulator ARR8 (225 aa).

The Response regulatory domain maps to 10–145; the sequence is HVLAVDDSLF…DLTKLKPHMM (136 aa). The residue at position 78 (aspartate 78) is a 4-aspartylphosphate.

The protein belongs to the ARR family. Type-A subfamily. In terms of processing, two-component system major event consists of a His-to-Asp phosphorelay between a sensor histidine kinase (HK) and a response regulator (RR). In plants, the His-to-Asp phosphorelay involves an additional intermediate named Histidine-containing phosphotransfer protein (HPt). This multistep phosphorelay consists of a His-Asp-His-Asp sequential transfer of a phosphate group between first a His and an Asp of the HK protein, followed by the transfer to a conserved His of the HPt protein and finally the transfer to an Asp in the receiver domain of the RR protein. Predominantly expressed in roots.

The protein localises to the nucleus. Its function is as follows. Functions as a response regulator involved in His-to-Asp phosphorelay signal transduction system. Phosphorylation of the Asp residue in the receiver domain activates the ability of the protein to promote the transcription of target genes. Type-A response regulators seem to act as negative regulators of the cytokinin signaling. In Arabidopsis thaliana (Mouse-ear cress), this protein is Two-component response regulator ARR8 (ARR8).